The following is a 119-amino-acid chain: MIQKNAILDVADNSGARKVLCIGFLGGKKRALVGDVIVVSARVVAPRGKVNKGRVYKAVVVRTKGPIRRLDGSTIRFSSNAVVLVNDQGDPLGTRVFGPVRKLPVGEFTKVMSLAVEVL.

It belongs to the universal ribosomal protein uL14 family. Part of the 50S ribosomal subunit. Forms a cluster with proteins L3 and L19. In the 70S ribosome, L14 and L19 interact and together make contacts with the 16S rRNA in bridges B5 and B8.

Its function is as follows. Binds to 23S rRNA. Forms part of two intersubunit bridges in the 70S ribosome. The protein is Large ribosomal subunit protein uL14 of Anaplasma marginale (strain St. Maries).